We begin with the raw amino-acid sequence, 293 residues long: Putative ribose uptake protein RbsU (293 aa).

The next 10 membrane-spanning stretches (helical) occupy residues 5–24 (AILI…TIAS), 34–51 (IFGA…LALF), 58–80 (GGMA…IITF), 95–114 (TTAF…LGNW), 121–138 (IIGF…RMTV), 153–170 (SAVI…IYSA), 177–199 (IGGF…IYAL), 212–234 (VSWQ…LISA), 241–263 (LATG…IFFL), and 273–292 (MITI…TVFI).

This sequence belongs to the GRP transporter (TC 2.A.7.5) family.

Its subcellular location is the cell membrane. In terms of biological role, could be involved in the uptake of ribose. This is Putative ribose uptake protein RbsU (rbsU) from Staphylococcus epidermidis (strain ATCC 35984 / DSM 28319 / BCRC 17069 / CCUG 31568 / BM 3577 / RP62A).